Here is a 347-residue protein sequence, read N- to C-terminus: Cyclic AMP-dependent transcription factor ATF-4 (347 aa).

The segment at 202-296 is disordered; it reads TPQCVKEEDT…AATRYRQKKR (95 aa). T211 is modified (phosphothreonine). Phosphoserine occurs at positions 213, 217, 222, 229, and 233. Residues 213–222 carry the BetaTrCP degron motif motif; the sequence is SDSDSGICMS. Polar residues predominate over residues 228–238; sequence GSPQHSPSTSR. P234 carries the post-translational modification 4-hydroxyproline. A phosphoserine mark is found at S243 and S246. Residues K256 and K268 each participate in a glycyl lysine isopeptide (Lys-Gly) (interchain with G-Cter in SUMO2) cross-link. Residues 269 to 283 show a composition bias toward basic and acidic residues; the sequence is VKTEKLDKKLKKMEQ. Residues 274–337 enclose the bZIP domain; that stretch reads LDKKLKKMEQ…QYLKDLIEEV (64 aa). Positions 276–296 are basic motif; that stretch reads KKLKKMEQNKTAATRYRQKKR. An interaction with GABBR1 region spans residues 301–337; sequence ALTGECKELEKKNEALKEKADSLAKEIQYLKDLIEEV. The tract at residues 302–330 is leucine-zipper; that stretch reads LTGECKELEKKNEALKEKADSLAKEIQYL. N6-acetyllysine is present on K307.

Belongs to the bZIP family. As to quaternary structure, binds DNA as a homodimer and as a heterodimer. Heterodimer; heterodimerizes with CEBPB. Heterodimer; heterodimerizes with DDIT3/CHOP. Interacts with CEP290 (via an N-terminal region). Interacts with NEK6, DAPK2 (isoform 2) and ZIPK/DAPK3. Interacts (via its leucine zipper domain) with GABBR1 and GABBR2 (via their C-termini). Forms a heterodimer with TXLNG in osteoblasts. Interacts (via its DNA binding domain) with FOXO1 (C-terminal half); the interaction occurs in osteoblasts and regulates glucose homeostasis through suppression of beta-cell proliferation and a decrease in insulin production. Interacts with SATB2; the interaction results in enhanced DNA binding and transactivation by these transcription factors. Interacts with ABRAXAS2. Interacts with TRIB3, inhibiting the transactivation activity of ATF4. Interacts with DISC1; which inhibits ATF4 transcription factor activity by disrupting ATF4 dimerization and DNA-binding. Interacts with EP300/p300; EP300/p300 stabilizes ATF4 and increases its transcriptional activity independently of its catalytic activity by preventing its ubiquitination. Ubiquitinated by SCF(BTRC) in response to mTORC1 signal, followed by proteasomal degradation and leading to down-regulate expression of SIRT4. Interaction with EP300/p300 inhibits ubiquitination by SCF(BTRC). In terms of processing, phosphorylation at Ser-243 by RPS6KA3/RSK2 in osteoblasts enhances transactivation activity and promotes osteoblast differentiation. Phosphorylated on the betaTrCP degron motif at Ser-217, followed by phosphorylation at Thr-211, Ser-222, Ser-229, Ser-233 and Ser-246, promoting interaction with BTRC and ubiquitination. Phosphorylation is promoted by mTORC1. Phosphorylation at Ser-213 by CK2 decreases its stability. Phosphorylated by NEK6. Post-translationally, hydroxylated by PHD3, leading to decreased protein stability. As to expression, expressed in brain, heart, liver, spleen, lung and muscle, but not testis.

It is found in the nucleus. Its subcellular location is the nucleus speckle. The protein resides in the cytoplasm. It localises to the cell membrane. The protein localises to the cytoskeleton. It is found in the microtubule organizing center. Its subcellular location is the centrosome. Functionally, transcription factor that binds the cAMP response element (CRE) (consensus: 5'-GTGACGT[AC][AG]-3') and displays two biological functions, as regulator of metabolic and redox processes under normal cellular conditions, and as master transcription factor during integrated stress response (ISR). Binds to asymmetric CRE's as a heterodimer and to palindromic CRE's as a homodimer. Core effector of the ISR, which is required for adaptation to various stress such as endoplasmic reticulum (ER) stress, amino acid starvation, mitochondrial stress or oxidative stress. During ISR, ATF4 translation is induced via an alternative ribosome translation re-initiation mechanism in response to EIF2S1/eIF-2-alpha phosphorylation, and stress-induced ATF4 acts as a master transcription factor of stress-responsive genes in order to promote cell recovery. Promotes the transcription of genes linked to amino acid sufficiency and resistance to oxidative stress to protect cells against metabolic consequences of ER oxidation. Activates the transcription of NLRP1, possibly in concert with other factors in response to ER stress. Activates the transcription of asparagine synthetase (ASNS) in response to amino acid deprivation or ER stress. However, when associated with DDIT3/CHOP, the transcriptional activation of the ASNS gene is inhibited in response to amino acid deprivation. Together with DDIT3/CHOP, mediates programmed cell death by promoting the expression of genes involved in cellular amino acid metabolic processes, mRNA translation and the terminal unfolded protein response (terminal UPR), a cellular response that elicits programmed cell death when ER stress is prolonged and unresolved. Activates the expression of COX7A2L/SCAF1 downstream of the EIF2AK3/PERK-mediated unfolded protein response, thereby promoting formation of respiratory chain supercomplexes and increasing mitochondrial oxidative phosphorylation. Together with DDIT3/CHOP, activates the transcription of the IRS-regulator TRIB3 and promotes ER stress-induced neuronal cell death by regulating the expression of BBC3/PUMA in response to ER stress. May cooperate with the UPR transcriptional regulator QRICH1 to regulate ER protein homeostasis which is critical for cell viability in response to ER stress. In the absence of stress, ATF4 translation is at low levels and it is required for normal metabolic processes such as embryonic lens formation, fetal liver hematopoiesis, bone development and synaptic plasticity. Acts as a regulator of osteoblast differentiation in response to phosphorylation by RPS6KA3/RSK2: phosphorylation in osteoblasts enhances transactivation activity and promotes expression of osteoblast-specific genes and post-transcriptionally regulates the synthesis of Type I collagen, the main constituent of the bone matrix. Cooperates with FOXO1 in osteoblasts to regulate glucose homeostasis through suppression of beta-cell production and decrease in insulin production. Activates transcription of SIRT4. Regulates the circadian expression of the core clock component PER2 and the serotonin transporter SLC6A4. Binds in a circadian time-dependent manner to the cAMP response elements (CRE) in the SLC6A4 and PER2 promoters and periodically activates the transcription of these genes. Mainly acts as a transcriptional activator in cellular stress adaptation, but it can also act as a transcriptional repressor: acts as a regulator of synaptic plasticity by repressing transcription, thereby inhibiting induction and maintenance of long-term memory. Regulates synaptic functions via interaction with DISC1 in neurons, which inhibits ATF4 transcription factor activity by disrupting ATF4 dimerization and DNA-binding. The polypeptide is Cyclic AMP-dependent transcription factor ATF-4 (Rattus norvegicus (Rat)).